The primary structure comprises 361 residues: Biotin synthase (361 aa).

One can recognise a Radical SAM core domain in the interval 63-290 (NTVQLSTLLS…RAMVRLSAGR (228 aa)). Residues Cys78, Cys82, and Cys85 each coordinate [4Fe-4S] cluster. The [2Fe-2S] cluster site is built by Cys122, Cys153, Cys213, and Arg285.

This sequence belongs to the radical SAM superfamily. Biotin synthase family. As to quaternary structure, homodimer. [4Fe-4S] cluster is required as a cofactor. Requires [2Fe-2S] cluster as cofactor.

It catalyses the reaction (4R,5S)-dethiobiotin + (sulfur carrier)-SH + 2 reduced [2Fe-2S]-[ferredoxin] + 2 S-adenosyl-L-methionine = (sulfur carrier)-H + biotin + 2 5'-deoxyadenosine + 2 L-methionine + 2 oxidized [2Fe-2S]-[ferredoxin]. It functions in the pathway cofactor biosynthesis; biotin biosynthesis; biotin from 7,8-diaminononanoate: step 2/2. In terms of biological role, catalyzes the conversion of dethiobiotin (DTB) to biotin by the insertion of a sulfur atom into dethiobiotin via a radical-based mechanism. The sequence is that of Biotin synthase from Paraburkholderia phytofirmans (strain DSM 17436 / LMG 22146 / PsJN) (Burkholderia phytofirmans).